A 410-amino-acid polypeptide reads, in one-letter code: Metal tolerance protein 3 (410 aa).

The disordered stretch occupies residues 1-58 (MDGDDRRTPLLGGEGGSTRPPSLRRRDSARSLRSTFLSRLPDKVRGGGDPERPAADVD). The Cytoplasmic portion of the chain corresponds to 1–114 (MDGDDRRTPL…EDKEQKQSES (114 aa)). A compositionally biased stretch (basic and acidic residues) spans 40–58 (LPDKVRGGGDPERPAADVD). Residues 115–135 (AMKISNYANIILLVFKVYATI) traverse the membrane as a helical segment. Residues 136-140 (KTGSM) are Vacuolar-facing. The chain crosses the membrane as a helical span at residues 141–161 (AIAASTLDSLLDFLAGGILYF). Residues 162–184 (THLTMKSVNIYKYPIGKLRVQPV) are Cytoplasmic-facing. Residues 185 to 205 (GIIVFAAIMATLGFQVLIQAI) form a helical membrane-spanning segment. The Vacuolar segment spans residues 206–221 (EQLVENKAGEKMTPEQ). A helical membrane pass occupies residues 222–242 (LIWLYSIMLSATVVKLALYIY). Over 243 to 258 (CRSSGNSIVQAYAKDH) the chain is Cytoplasmic. The chain crosses the membrane as a helical span at residues 259–275 (YFDVVTNVVGLVAAVLG). Residues 276-284 (DKFFWWIDP) lie on the Vacuolar side of the membrane. The helical transmembrane segment at 285–303 (VGAVLLAVYTIVNWSGTVY) threads the bilayer. Topologically, residues 304–410 (ENAVTLVGQC…VRSRLPSTEP (107 aa)) are cytoplasmic.

The protein belongs to the cation diffusion facilitator (CDF) transporter (TC 2.A.4) family. SLC30A subfamily.

It localises to the vacuole membrane. In terms of biological role, involved in sequestration of excess metal in the cytoplasm into vacuoles to maintain metal homeostasis. The sequence is that of Metal tolerance protein 3 (MTP3) from Oryza sativa subsp. japonica (Rice).